The primary structure comprises 251 residues: uncharacterized protein (251 aa).

This is an uncharacterized protein from Homo sapiens (Human).